We begin with the raw amino-acid sequence, 145 residues long: Large ribosomal subunit protein uL14m (145 aa).

The N-terminal 30 residues, 1–30 (MAFSSGLWGPCVHMSRAFSQRCFSTTGSLG), are a transit peptide targeting the mitochondrion.

This sequence belongs to the universal ribosomal protein uL14 family. In terms of assembly, component of the mitochondrial ribosome large subunit (39S) which comprises a 16S rRNA and about 50 distinct proteins. Interacts with MALSU1.

It localises to the mitochondrion. In terms of biological role, may form part of 2 intersubunit bridges in the assembled ribosome. Upon binding to MALSU1, intersubunit bridge formation is blocked, preventing ribosome formation and repressing translation. The protein is Large ribosomal subunit protein uL14m (MRPL14) of Bos taurus (Bovine).